We begin with the raw amino-acid sequence, 477 residues long: Regulatory protein HrpB (477 aa).

The region spanning 375-477 (RRAYRYIIEN…NEAPSETIWR (103 aa)) is the HTH araC/xylS-type domain. 2 consecutive DNA-binding regions (H-T-H motif) follow at residues 393–414 (REVAAHINVTERALQLAFKSAV) and 444–467 (IIDTASRWGIRSRSALVKGYRKQF).

Functionally, positive regulation of hypersensitive response genes involved in plant pathogenicity and partly of its own synthesis in minimal medium. The chain is Regulatory protein HrpB (hrpB) from Ralstonia nicotianae (strain ATCC BAA-1114 / GMI1000) (Ralstonia solanacearum).